The chain runs to 148 residues: MKLDLKILDARMRDYLPAYATTGSAGLDLRACLDAPVTLQPGETTLVPTGLAIHLADPGYAALILPRSGLGHKHGIVLGNLVGLIDSDYQGQLMVSTWNRGQTAFVLNPFERLAQLVIVPVVQAQFNIVDEFTESDRGEGGFGSTGRH.

Substrate-binding positions include 67 to 69 (RSG), Asn80, 84 to 86 (LID), and Met94.

This sequence belongs to the dUTPase family. The cofactor is Mg(2+).

It carries out the reaction dUTP + H2O = dUMP + diphosphate + H(+). Its pathway is pyrimidine metabolism; dUMP biosynthesis; dUMP from dCTP (dUTP route): step 2/2. In terms of biological role, this enzyme is involved in nucleotide metabolism: it produces dUMP, the immediate precursor of thymidine nucleotides and it decreases the intracellular concentration of dUTP so that uracil cannot be incorporated into DNA. The chain is Deoxyuridine 5'-triphosphate nucleotidohydrolase from Burkholderia cenocepacia (strain HI2424).